Consider the following 765-residue polypeptide: Periplasmic beta-glucosidase (765 aa).

The first 20 residues, 1–20, serve as a signal peptide directing secretion; it reads MKWLCSVGIAVSLALQPALA. Residue D287 is part of the active site.

It belongs to the glycosyl hydrolase 3 family.

It localises to the periplasm. The catalysed reaction is Hydrolysis of terminal, non-reducing beta-D-glucosyl residues with release of beta-D-glucose.. This is Periplasmic beta-glucosidase (bglX) from Escherichia coli (strain K12).